The sequence spans 437 residues: Probable inactive DNA (cytosine-5)-methyltransferase DRM1B (437 aa).

UBA domains follow at residues 20–60 and 120–164; these read SAPS…LLQL and EMSE…IYAP. The SAM-dependent MTase DRM-type domain occupies 243–437; it reads VHRNLPDHAL…LIQLHTTSLC (195 aa).

This sequence belongs to the class I-like SAM-binding methyltransferase superfamily. DRM-methyltransferase family.

It localises to the nucleus. In terms of biological role, involved in de novo DNA methylation. Involved in RNA-directed DNA methylation (RdDM). The polypeptide is Probable inactive DNA (cytosine-5)-methyltransferase DRM1B (Oryza sativa subsp. japonica (Rice)).